An 821-amino-acid chain; its full sequence is Lysosomal beta glucosidase (821 aa).

The first 24 residues, M1 to G24, serve as a signal peptide directing secretion. Positions S25 to N69 are excised as a propeptide. N113, N146, and N266 each carry an N-linked (GlcNAc...) asparagine glycan. D363 is an active-site residue. N-linked (GlcNAc...) asparagine glycans are attached at residues N535, N555, N703, and N721.

Belongs to the glycosyl hydrolase 3 family. Glycosylated. The polyoligosaccharides are of the high-mannose type and are highly substituted with both phosphate and sulfate moieties.

The protein resides in the lysosome. It carries out the reaction Hydrolysis of terminal, non-reducing beta-D-glucosyl residues with release of beta-D-glucose.. The polypeptide is Lysosomal beta glucosidase (gluA) (Dictyostelium discoideum (Social amoeba)).